A 219-amino-acid chain; its full sequence is Ribose-5-phosphate isomerase A (219 aa).

Substrate contacts are provided by residues 28 to 31 (SGST), 81 to 84 (DGAD), and 94 to 97 (KGGG). The active-site Proton acceptor is the Glu103. Lys121 provides a ligand contact to substrate.

The protein belongs to the ribose 5-phosphate isomerase family. In terms of assembly, homodimer.

The catalysed reaction is aldehydo-D-ribose 5-phosphate = D-ribulose 5-phosphate. The protein operates within carbohydrate degradation; pentose phosphate pathway; D-ribose 5-phosphate from D-ribulose 5-phosphate (non-oxidative stage): step 1/1. In terms of biological role, catalyzes the reversible conversion of ribose-5-phosphate to ribulose 5-phosphate. This Haemophilus ducreyi (strain 35000HP / ATCC 700724) protein is Ribose-5-phosphate isomerase A.